A 509-amino-acid polypeptide reads, in one-letter code: 3-octaprenyl-4-hydroxybenzoate carboxy-lyase (509 aa).

Position 179 (asparagine 179) interacts with Mn(2+). Prenylated FMN contacts are provided by residues 182 to 184, 196 to 198, and 201 to 202; these read IYR, RWL, and RG. Glutamate 245 serves as a coordination point for Mn(2+). Aspartate 304 acts as the Proton donor in catalysis.

It belongs to the UbiD family. Homohexamer. Prenylated FMN serves as cofactor. Requires Mn(2+) as cofactor.

It is found in the cell membrane. It catalyses the reaction a 4-hydroxy-3-(all-trans-polyprenyl)benzoate + H(+) = a 2-(all-trans-polyprenyl)phenol + CO2. The protein operates within cofactor biosynthesis; ubiquinone biosynthesis. Functionally, catalyzes the decarboxylation of 3-octaprenyl-4-hydroxy benzoate to 2-octaprenylphenol, an intermediate step in ubiquinone biosynthesis. The protein is 3-octaprenyl-4-hydroxybenzoate carboxy-lyase of Cupriavidus pinatubonensis (strain JMP 134 / LMG 1197) (Cupriavidus necator (strain JMP 134)).